The chain runs to 211 residues: Transcriptional regulatory protein LiaR (211 aa).

Residues 3–119 enclose the Response regulatory domain; sequence RVLLIDDHEM…EIADAIRAAS (117 aa). Aspartate 54 bears the 4-aspartylphosphate mark. The HTH luxR-type domain occupies 143 to 208; that stretch reads NALPHESLTK…QAAVYAHRNH (66 aa). The segment at residues 167-186 is a DNA-binding region (H-T-H motif); sequence NKEIGEELFITIKTVKTHIT.

Post-translationally, phosphorylated by LiaS.

It is found in the cytoplasm. Functionally, member of the two-component regulatory system LiaS/LiaR probably involved in response to a subset of cell wall-active antibiotics that interfere with the lipid II cycle in the cytoplasmic membrane (bacitracin, nisin, ramoplanin and vancomycin). Also seems to be involved in response to cationic antimicrobial peptides and secretion stress. LiaR regulates the transcription of the liaIHGFSR operon. The sequence is that of Transcriptional regulatory protein LiaR (liaR) from Bacillus subtilis (strain 168).